A 326-amino-acid chain; its full sequence is Peroxidase 43 (326 aa).

The first 24 residues, 1–24 (MVWANAKMRLALSLVTVFFGISLA), serve as a signal peptide directing secretion. Intrachain disulfides connect cysteine 35–cysteine 112, cysteine 68–cysteine 73, cysteine 118–cysteine 322, and cysteine 196–cysteine 228. Catalysis depends on histidine 66, which acts as the Proton acceptor. 5 residues coordinate Ca(2+): aspartate 67, valine 70, glycine 72, aspartate 74, and serine 76. N-linked (GlcNAc...) asparagine glycosylation is present at asparagine 151. Residue proline 159 coordinates substrate. Heme b is bound at residue histidine 189. Threonine 190 lines the Ca(2+) pocket. Residues aspartate 241, serine 244, and aspartate 249 each coordinate Ca(2+).

This sequence belongs to the peroxidase family. Classical plant (class III) peroxidase subfamily. Heme b is required as a cofactor. It depends on Ca(2+) as a cofactor.

The protein localises to the secreted. It catalyses the reaction 2 a phenolic donor + H2O2 = 2 a phenolic radical donor + 2 H2O. Removal of H(2)O(2), oxidation of toxic reductants, biosynthesis and degradation of lignin, suberization, auxin catabolism, response to environmental stresses such as wounding, pathogen attack and oxidative stress. These functions might be dependent on each isozyme/isoform in each plant tissue. The chain is Peroxidase 43 (PER43) from Arabidopsis thaliana (Mouse-ear cress).